A 471-amino-acid polypeptide reads, in one-letter code: Glutamate--tRNA ligase (471 aa).

The 'HIGH' region signature appears at Pro9–Gly19. Residues Cys98, Cys100, Cys125, and His127 each coordinate Zn(2+). A 'KMSKS' region motif is present at residues Lys237–Arg241. Lys240 provides a ligand contact to ATP.

It belongs to the class-I aminoacyl-tRNA synthetase family. Glutamate--tRNA ligase type 1 subfamily. As to quaternary structure, monomer. Zn(2+) is required as a cofactor.

The protein resides in the cytoplasm. The catalysed reaction is tRNA(Glu) + L-glutamate + ATP = L-glutamyl-tRNA(Glu) + AMP + diphosphate. Functionally, catalyzes the attachment of glutamate to tRNA(Glu) in a two-step reaction: glutamate is first activated by ATP to form Glu-AMP and then transferred to the acceptor end of tRNA(Glu). The chain is Glutamate--tRNA ligase from Salmonella dublin (strain CT_02021853).